The sequence spans 276 residues: Octanoyltransferase LipM (276 aa).

The region spanning 31–246 (GLIPPVIRFY…GFAKSLQIEL (216 aa)) is the BPL/LPL catalytic domain. Cys148 (acyl-thioester intermediate) is an active-site residue.

Belongs to the octanoyltransferase LipM family. As to quaternary structure, monomer.

It carries out the reaction octanoyl-[ACP] + L-lysyl-[protein] = N(6)-octanoyl-L-lysyl-[protein] + holo-[ACP] + H(+). Its pathway is protein modification; protein lipoylation via endogenous pathway; protein N(6)-(lipoyl)lysine from octanoyl-[acyl-carrier-protein]. Its function is as follows. Catalyzes the transfer of endogenously produced octanoic acid from octanoyl-acyl-carrier-protein onto the lipoyl domain of GcvH, an intermediate carrier during protein lipoylation. The protein is Octanoyltransferase LipM of Lysinibacillus sphaericus (strain C3-41).